The primary structure comprises 202 residues: Elongation factor Ts, chloroplastic (202 aa).

Belongs to the EF-Ts family.

It localises to the plastid. It is found in the chloroplast. Functionally, associates with the EF-Tu.GDP complex and induces the exchange of GDP to GTP. It remains bound to the aminoacyl-tRNA.EF-Tu.GTP complex up to the GTP hydrolysis stage on the ribosome. This chain is Elongation factor Ts, chloroplastic (tsf), found in Phaeodactylum tricornutum (strain CCAP 1055/1).